Consider the following 105-residue polypeptide: N(2)-fixation sustaining protein CowN (105 aa).

It belongs to the CowN family.

Is required to sustain N(2)-dependent growth in the presence of low levels of carbon monoxide (CO). Probably acts by protecting the N(2) fixation ability of the nitrogenase complex, which is inactivated in the presence of CO. In Tolumonas auensis (strain DSM 9187 / NBRC 110442 / TA 4), this protein is N(2)-fixation sustaining protein CowN.